A 470-amino-acid polypeptide reads, in one-letter code: Argininosuccinate lyase (470 aa).

This sequence belongs to the lyase 1 family. Argininosuccinate lyase subfamily.

It is found in the cytoplasm. The catalysed reaction is 2-(N(omega)-L-arginino)succinate = fumarate + L-arginine. It functions in the pathway amino-acid biosynthesis; L-arginine biosynthesis; L-arginine from L-ornithine and carbamoyl phosphate: step 3/3. The protein is Argininosuccinate lyase of Mycobacterium marinum (strain ATCC BAA-535 / M).